Consider the following 66-residue polypeptide: Large ribosomal subunit protein bL35 (66 aa).

Belongs to the bacterial ribosomal protein bL35 family.

The protein is Large ribosomal subunit protein bL35 of Synechococcus sp. (strain JA-2-3B'a(2-13)) (Cyanobacteria bacterium Yellowstone B-Prime).